Reading from the N-terminus, the 408-residue chain is G2/mitotic-specific cyclin-B (408 aa).

It belongs to the cyclin family. Cyclin AB subfamily. As to quaternary structure, interacts with the CDC2 protein kinase to form a serine/threonine kinase holoenzyme complex also known as maturation promoting factor (MPF). The cyclin subunit imparts substrate specificity to the complex.

In terms of biological role, essential for the control of the cell cycle at the G2/M (mitosis) transition. The polypeptide is G2/mitotic-specific cyclin-B (Patella vulgata (Common limpet)).